The chain runs to 608 residues: Tyrosyl-DNA phosphodiesterase 1 (608 aa).

Residues 1–101 (MSQEGDYGRW…SDDELQPEMP (101 aa)) are disordered. Serine 61 is subject to Phosphoserine. Phosphothreonine is present on threonine 147. Phosphoserine is present on serine 148. The Nucleophile role is filled by histidine 263. A substrate-binding site is contributed by lysine 265. An interaction with DNA region spans residues 400–403 (SVGS). Histidine 493 acts as the Proton donor/acceptor in catalysis. A substrate-binding site is contributed by lysine 495.

It belongs to the tyrosyl-DNA phosphodiesterase family. In terms of assembly, monomer. In terms of processing, phosphorylated on serine and/or threonine residues, but not on tyrosine residues. As to expression, ubiquitously expressed. Similar expression throughout the central nervous system (whole brain, amygdala, caudate nucleus, cerebellum, cerebral cortex, frontal lobe, hippocampus, medulla oblongata, occipital lobe, putamen, substantia nigra, temporal lobe, thalamus, nucleus accumbens and spinal cord) and increased expression in testis and thymus.

The protein localises to the nucleus. Its subcellular location is the cytoplasm. DNA repair enzyme that can remove a variety of covalent adducts from DNA through hydrolysis of a 3'-phosphodiester bond, giving rise to DNA with a free 3' phosphate. Catalyzes the hydrolysis of dead-end complexes between DNA and the topoisomerase I active site tyrosine residue. Hydrolyzes 3'-phosphoglycolates on protruding 3' ends on DNA double-strand breaks due to DNA damage by radiation and free radicals. Acts on blunt-ended double-strand DNA breaks and on single-stranded DNA. Has low 3'exonuclease activity and can remove a single nucleoside from the 3'end of DNA and RNA molecules with 3'hydroxyl groups. Has no exonuclease activity towards DNA or RNA with a 3'phosphate. The protein is Tyrosyl-DNA phosphodiesterase 1 (TDP1) of Homo sapiens (Human).